The primary structure comprises 126 residues: Glycine cleavage system H protein (126 aa).

Positions 21-103 (TVTVGISDHA…YESGWIARIK (83 aa)) constitute a Lipoyl-binding domain. N6-lipoyllysine is present on Lys62.

The protein belongs to the GcvH family. In terms of assembly, the glycine cleavage system is composed of four proteins: P, T, L and H. It depends on (R)-lipoate as a cofactor.

In terms of biological role, the glycine cleavage system catalyzes the degradation of glycine. The H protein shuttles the methylamine group of glycine from the P protein to the T protein. This Aliivibrio fischeri (strain MJ11) (Vibrio fischeri) protein is Glycine cleavage system H protein.